A 170-amino-acid polypeptide reads, in one-letter code: Urease accessory protein UreE (170 aa).

Belongs to the UreE family.

Its subcellular location is the cytoplasm. Its function is as follows. Involved in urease metallocenter assembly. Binds nickel. Probably functions as a nickel donor during metallocenter assembly. This chain is Urease accessory protein UreE, found in Helicobacter acinonychis (strain Sheeba).